A 492-amino-acid chain; its full sequence is Catalase isozyme 1 (492 aa).

Catalysis depends on residues His-65 and Asn-138. Residue Tyr-348 coordinates heme.

Belongs to the catalase family. Homotetramer. Heme is required as a cofactor. As to expression, scutella, milky endosperm of immature kernels, leaves and epicotyls.

The protein localises to the peroxisome. It carries out the reaction 2 H2O2 = O2 + 2 H2O. Occurs in almost all aerobically respiring organisms and serves to protect cells from the toxic effects of hydrogen peroxide. The chain is Catalase isozyme 1 (CAT1) from Zea mays (Maize).